Here is a 215-residue protein sequence, read N- to C-terminus: Protein-L-isoaspartate O-methyltransferase (215 aa).

Ser-62 is an active-site residue.

Belongs to the methyltransferase superfamily. L-isoaspartyl/D-aspartyl protein methyltransferase family.

The protein localises to the cytoplasm. The catalysed reaction is [protein]-L-isoaspartate + S-adenosyl-L-methionine = [protein]-L-isoaspartate alpha-methyl ester + S-adenosyl-L-homocysteine. Its function is as follows. Catalyzes the methyl esterification of L-isoaspartyl residues in peptides and proteins that result from spontaneous decomposition of normal L-aspartyl and L-asparaginyl residues. It plays a role in the repair and/or degradation of damaged proteins. In Ruegeria pomeroyi (strain ATCC 700808 / DSM 15171 / DSS-3) (Silicibacter pomeroyi), this protein is Protein-L-isoaspartate O-methyltransferase.